The chain runs to 362 residues: CLIP domain-containing serine protease B10 (362 aa).

The N-terminal stretch at 1–19 (MAKVVDCVLLLAFIAVVRG) is a signal peptide. The Clip domain maps to 22–75 (ACRTPDHRDGVCHPVQQCPSVRDEFFNSDRVLSEDEIDYLRKLQCKTKDVTICC). Intrachain disulfides connect C23–C74, C33–C66, and C39–C75. The Peptidase S1 domain maps to 110–361 (IIGGNYTAID…YLDWIRQNIR (252 aa)). The N-linked (GlcNAc...) asparagine glycan is linked to N114. A disulfide bridge links C140 with C156. Active-site charge relay system residues include H155 and D220. N254 carries N-linked (GlcNAc...) asparagine glycosylation. Intrachain disulfides connect C285–C300 and C310–C337. Residue S314 is the Charge relay system of the active site.

Belongs to the peptidase S1 family. CLIP subfamily. In terms of assembly, forms a covalent heterodimer with SRPN2; the interaction inhibits CLIPB10 catalytic activity. Cleaved by an unknown protease into an active form.

It is found in the secreted. Inhibited by serpin SRPN2. In terms of biological role, serine protease which preferentially cleaves after arginine residues. Involved in the innate immune response against parasite P.bergei infection by activating the melanization cascade. Probably in the hemolymph, cleaves and activates prophenoloxidase (PPO), which functions in the formation of pigments such as melanin and other polyphenolic compounds. In the susceptible strain G3, appears to be dispensable for ookinete elimination which occurs by lysis. In Anopheles gambiae (African malaria mosquito), this protein is CLIP domain-containing serine protease B10.